The chain runs to 154 residues: Large ribosomal subunit protein uL13 (154 aa).

The protein belongs to the universal ribosomal protein uL13 family. Part of the 50S ribosomal subunit.

This protein is one of the early assembly proteins of the 50S ribosomal subunit, although it is not seen to bind rRNA by itself. It is important during the early stages of 50S assembly. The chain is Large ribosomal subunit protein uL13 from Sinorhizobium medicae (strain WSM419) (Ensifer medicae).